The sequence spans 229 residues: 2-C-methyl-D-erythritol 4-phosphate cytidylyltransferase (229 aa).

This sequence belongs to the IspD/TarI cytidylyltransferase family. IspD subfamily.

It carries out the reaction 2-C-methyl-D-erythritol 4-phosphate + CTP + H(+) = 4-CDP-2-C-methyl-D-erythritol + diphosphate. The protein operates within isoprenoid biosynthesis; isopentenyl diphosphate biosynthesis via DXP pathway; isopentenyl diphosphate from 1-deoxy-D-xylulose 5-phosphate: step 2/6. Catalyzes the formation of 4-diphosphocytidyl-2-C-methyl-D-erythritol from CTP and 2-C-methyl-D-erythritol 4-phosphate (MEP). This is 2-C-methyl-D-erythritol 4-phosphate cytidylyltransferase from Neisseria meningitidis serogroup B (strain ATCC BAA-335 / MC58).